Reading from the N-terminus, the 225-residue chain is GTP cyclohydrolase 1 (225 aa).

Residues 1–12 show a composition bias toward basic and acidic residues; sequence MERSKQSHDNQA. The disordered stretch occupies residues 1-59; it reads MERSKQSHDNQADSRPTTNESSLNGHFDGLVKKTPGMWDVKGRGTAGESSSHTGSSVVE. Composition is skewed to polar residues over residues 13–24 and 47–58; these read DSRPTTNESSLN and GESSSHTGSSVV. Zn(2+) is bound by residues Cys-149, His-152, and Cys-220.

It belongs to the GTP cyclohydrolase I family. As to quaternary structure, toroid-shaped homodecamer, composed of two pentamers of five dimers.

It localises to the cytoplasm. Its subcellular location is the nucleus. The enzyme catalyses GTP + H2O = 7,8-dihydroneopterin 3'-triphosphate + formate + H(+). Its pathway is cofactor biosynthesis; 7,8-dihydroneopterin triphosphate biosynthesis; 7,8-dihydroneopterin triphosphate from GTP: step 1/1. With respect to regulation, GTP shows a positive allosteric effect, and tetrahydrobiopterin inhibits the enzyme activity. Zinc is required for catalytic activity. Inhibited by Mg(2+). Its function is as follows. May positively regulate nitric oxide synthesis in endothelial cells. May be involved in dopamine synthesis. May modify pain sensitivity and persistence. In Oncorhynchus mykiss (Rainbow trout), this protein is GTP cyclohydrolase 1 (gch1).